Reading from the N-terminus, the 124-residue chain is Flagellar transcriptional regulator FlhD (124 aa).

It belongs to the FlhD family. In terms of assembly, homodimer; disulfide-linked. Forms a heterohexamer composed of two FlhC and four FlhD subunits. Each FlhC binds a FlhD dimer, forming a heterotrimer, and a hexamer assembles by dimerization of two heterotrimers.

It is found in the cytoplasm. In terms of biological role, functions in complex with FlhC as a master transcriptional regulator that regulates transcription of several flagellar and non-flagellar operons by binding to their promoter region. Activates expression of class 2 flagellar genes, including fliA, which is a flagellum-specific sigma factor that turns on the class 3 genes. Also regulates genes whose products function in a variety of physiological pathways. The polypeptide is Flagellar transcriptional regulator FlhD (Pectobacterium carotovorum (Erwinia carotovora)).